Reading from the N-terminus, the 313-residue chain is 3'-5' exoribonuclease YhaM (313 aa).

Positions His-163–Ser-279 constitute an HD domain.

It belongs to the YhaM family.

Functionally, shows a 3'-5' exoribonuclease activity. This Listeria monocytogenes serotype 4b (strain CLIP80459) protein is 3'-5' exoribonuclease YhaM.